Consider the following 108-residue polypeptide: Cytochrome c-555 (108 aa).

The first 22 residues, 1–22 (MSRFVSAALVGAALLVSGNAFA), serve as a signal peptide directing secretion. Residues C36, C39, H40, and M82 each coordinate heme c.

Binds 1 heme c group covalently per subunit.

Functionally, this basic c-type monoheme cytochrome has been found exclusively in the green photosynthetic bacteria, although its role in bacterial photosynthesis is not established. It has an unusually low redox potential compared with mitochondrial cytochrome c. It is reactive with cytochrome c oxidases but not with reductases. This is Cytochrome c-555 from Chlorobaculum tepidum (strain ATCC 49652 / DSM 12025 / NBRC 103806 / TLS) (Chlorobium tepidum).